Reading from the N-terminus, the 158-residue chain is F(420)H(2) dehydrogenase subunit C (158 aa).

The protein belongs to the complex I 30 kDa subunit family. In terms of assembly, the FPO complex is composed of at least 13 different subunits.

Its subcellular location is the cell membrane. The enzyme catalyses methanophenazine + reduced coenzyme F420-(gamma-L-Glu)(n) = dihydromethanophenazine + oxidized coenzyme F420-(gamma-L-Glu)(n) + H(+). Its function is as follows. Component of the F(420)H(2) dehydrogenase (FPO complex) which is part of the energy-conserving F(420)H(2):heterodisulfide oxidoreductase system. The membrane-bound electron transfer system of the complex plays an important role in the metabolism of methylotrophic methanogens when the organisms grow on methanol or methylamines. Catalyzes the oxidation of methanophenazine to dihydromethanophenazine. It shuttles electrons from F(420)H(2), via FAD and iron-sulfur (Fe-S) centers, to methanophenazine (an electron carrier in the membrane). It couples the redox reaction to proton translocation (for every two electrons transferred, two hydrogen ions are translocated across the cytoplasmic membrane), and thus conserves the redox energy in a proton gradient. It also catalyzes the oxidation of F(420)H(2) with quinones such as 2,3-dimethyl-1,4-naphthoquinone, 2-methyl-1,4-naphthoquinone and tetramethyl-p-benzoquinone. The polypeptide is F(420)H(2) dehydrogenase subunit C (fpoC) (Methanosarcina mazei (strain ATCC BAA-159 / DSM 3647 / Goe1 / Go1 / JCM 11833 / OCM 88) (Methanosarcina frisia)).